Consider the following 225-residue polypeptide: UPF0173 metal-dependent hydrolase Fjoh_2786 (225 aa).

This sequence belongs to the UPF0173 family.

The protein is UPF0173 metal-dependent hydrolase Fjoh_2786 of Flavobacterium johnsoniae (strain ATCC 17061 / DSM 2064 / JCM 8514 / BCRC 14874 / CCUG 350202 / NBRC 14942 / NCIMB 11054 / UW101) (Cytophaga johnsonae).